The primary structure comprises 722 residues: Dual specificity tyrosine-phosphorylation-regulated kinase 2 (722 aa).

Residue Ser-25 is modified to Phosphoserine. Positions 54 to 127 (TTTSLNGNGN…SGELKCNTPM (74 aa)) are disordered. The span at 66–119 (GNSNSNNNNNIGSPVSSSTTNSSNGGNERGSSTKSNSSSGSGSSGNSASSTGSG) shows a compositional bias: low complexity. The 297-residue stretch at 198 to 494 (YEILEVIGKG…PDEAAHHEFL (297 aa)) folds into the Protein kinase domain. Residues 204–212 (IGKGSFGQV) and Lys-227 contribute to the ATP site. The active-site Proton acceptor is Asp-324. Tyr-356 and Tyr-358 each carry phosphotyrosine; by autocatalysis. Disordered stretches follow at residues 494 to 519 (LQPS…LNSV), 557 to 582 (TTKS…PDIK), 624 to 643 (GSGS…LPGT), and 679 to 722 (TTTH…FGRA). Residues 506–519 (RMSSSSSSSGLNSV) are compositionally biased toward low complexity. Over residues 557–576 (TTKSRQQPPSQSHGHAQSNG) the composition is skewed to polar residues. Composition is skewed to low complexity over residues 626–635 (GSTHHVSSAA) and 689–707 (GQQQ…MSHS).

This sequence belongs to the protein kinase superfamily. CMGC Ser/Thr protein kinase family. MNB/DYRK subfamily. The cofactor is Mg(2+). Post-translationally, phosphorylated on serine/threonine residues.

The protein resides in the cytoplasm. The enzyme catalyses L-seryl-[protein] + ATP = O-phospho-L-seryl-[protein] + ADP + H(+). The catalysed reaction is L-threonyl-[protein] + ATP = O-phospho-L-threonyl-[protein] + ADP + H(+). It carries out the reaction L-tyrosyl-[protein] + ATP = O-phospho-L-tyrosyl-[protein] + ADP + H(+). Autophosphorylates on Tyr-356 and Tyr-358. Its function is as follows. In vitro; can phosphorylate exogenous substrates on Ser and Thr residues. May have a physiological role in development being involved in cellular growth and differentiation. The polypeptide is Dual specificity tyrosine-phosphorylation-regulated kinase 2 (Drosophila melanogaster (Fruit fly)).